Here is a 154-residue protein sequence, read N- to C-terminus: Ribonuclease H (154 aa).

In terms of domain architecture, RNase H type-1 spans 1–142 (MRKQIEIFTD…CDELAKQGAE (142 aa)). Positions 10, 48, 70, and 134 each coordinate Mg(2+).

It belongs to the RNase H family. Monomer. Mg(2+) is required as a cofactor.

The protein resides in the cytoplasm. It carries out the reaction Endonucleolytic cleavage to 5'-phosphomonoester.. In terms of biological role, endonuclease that specifically degrades the RNA of RNA-DNA hybrids. This is Ribonuclease H from Actinobacillus succinogenes (strain ATCC 55618 / DSM 22257 / CCUG 43843 / 130Z).